Reading from the N-terminus, the 201-residue chain is Alpha-1-acid glycoprotein 1 (201 aa).

Positions 1 to 18 (MALSWVLTVLSLLPLLEA) are cleaved as a signal peptide. Position 19 is a pyrrolidone carboxylic acid (Gln19). 2 cysteine pairs are disulfide-bonded: Cys23-Cys165 and Cys90-Cys183. The N-linked (GlcNAc...) (complex) asparagine glycan is linked to Asn33. N-linked (GlcNAc...) asparagine glycosylation is present at Asn56. An N-linked (GlcNAc...) (complex) asparagine glycan is attached at Asn72. N-linked (GlcNAc...) asparagine glycans are attached at residues Asn93 and Asn103.

This sequence belongs to the calycin superfamily. Lipocalin family. N-glycosylated. N-glycan heterogeneity at Asn-33: Hex5HexNAc4 (minor), Hex6HexNAc5 (major) and dHex1Hex6HexNAc5 (minor). In terms of tissue distribution, expressed by the liver and secreted in plasma.

It localises to the secreted. Functions as a transport protein in the blood stream. Binds various ligands in the interior of its beta-barrel domain. Also binds synthetic drugs and influences their distribution and availability in the body. Appears to function in modulating the activity of the immune system during the acute-phase reaction. The polypeptide is Alpha-1-acid glycoprotein 1 (ORM1) (Homo sapiens (Human)).